The following is a 357-amino-acid chain: DNA replication and repair protein RecF (357 aa).

An ATP-binding site is contributed by 30–37 (GANGSGKT).

It belongs to the RecF family.

It localises to the cytoplasm. Functionally, the RecF protein is involved in DNA metabolism; it is required for DNA replication and normal SOS inducibility. RecF binds preferentially to single-stranded, linear DNA. It also seems to bind ATP. This Salmonella agona (strain SL483) protein is DNA replication and repair protein RecF.